The primary structure comprises 232 residues: Urease accessory protein UreF (232 aa).

Belongs to the UreF family. UreD, UreF and UreG form a complex that acts as a GTP-hydrolysis-dependent molecular chaperone, activating the urease apoprotein by helping to assemble the nickel containing metallocenter of UreC. The UreE protein probably delivers the nickel.

The protein resides in the cytoplasm. Required for maturation of urease via the functional incorporation of the urease nickel metallocenter. The sequence is that of Urease accessory protein UreF from Trichodesmium erythraeum (strain IMS101).